A 140-amino-acid chain; its full sequence is Transcription antitermination protein NusB (140 aa).

This sequence belongs to the NusB family.

Involved in transcription antitermination. Required for transcription of ribosomal RNA (rRNA) genes. Binds specifically to the boxA antiterminator sequence of the ribosomal RNA (rrn) operons. The polypeptide is Transcription antitermination protein NusB (Streptococcus pneumoniae (strain 70585)).